A 227-amino-acid polypeptide reads, in one-letter code: DIELKLSTRPEKRVGSDELWDRAESALASALDSAGQPYDLQPGEGAFYGPKIEFSLKDCLGRVWQCGTLQLDFNLPIRLSAEYVSEDNSRKNPVMLHRAILGSFERFIGILIEHYEGAFPAWLAPTQAVIMNITDKQADFALEVEKTLAESGFRAKSDLRNEKIGFKIREHTLLKVPYLLVIGDREVEMQTVAVRTREGADLGSMPVAQFAEFLAQAVSRRGRQDTE.

The interval 1–120 is catalytic; sequence DIELKLSTRP…LIEHYEGAFP (120 aa).

The protein belongs to the class-II aminoacyl-tRNA synthetase family. Homodimer.

The protein resides in the cytoplasm. The enzyme catalyses tRNA(Thr) + L-threonine + ATP = L-threonyl-tRNA(Thr) + AMP + diphosphate + H(+). In terms of biological role, catalyzes the attachment of threonine to tRNA(Thr) in a two-step reaction: L-threonine is first activated by ATP to form Thr-AMP and then transferred to the acceptor end of tRNA(Thr). Also edits incorrectly charged L-seryl-tRNA(Thr). This Pseudomonas syringae pv. syringae protein is Threonine--tRNA ligase.